A 61-amino-acid polypeptide reads, in one-letter code: Metallothionein-1 (61 aa).

M1 is subject to N-acetylmethionine. The interval 1–29 (MDPNCSCSTGGSCTCTSSCACKNCKCTSC) is beta. C5, C7, C13, C15, C19, C21, C24, C26, C29, C33, C34, C36, C37, C41, C44, C48, C50, C57, C59, and C60 together coordinate a divalent metal cation. The alpha stretch occupies residues 30–61 (KKSCCSCCPVGCSKCAQGCVCKGAADKCTCCA).

Belongs to the metallothionein superfamily. Type 1 family.

In terms of biological role, metallothioneins have a high content of cysteine residues that bind various heavy metals; these proteins are transcriptionally regulated by both heavy metals and glucocorticoids. In Mus musculus (Mouse), this protein is Metallothionein-1 (Mt1).